A 350-amino-acid polypeptide reads, in one-letter code: Serine-threonine kinase receptor-associated protein (350 aa).

WD repeat units lie at residues 12 to 56, 57 to 96, 98 to 137, 141 to 179, 180 to 212, 221 to 262, and 263 to 302; these read GHTR…GTFL, GHKGAVWGATLNKDATKAATAAADFTAKVWDAVSGDELMT, AHKHIVKTVDFTQDSNYLLTGGQDKLLRIYDLNKPEAEPK, GHTSGIKKALWCSEDKQILSADDKTVRLWDHATMTEVKS, LNFNMSVSSMEYIPEGEILVITYGRSIAFHSAV, EAPA…ESYK, and GHFGPIHCVRFSPDGELYASGSEDGTLRLWQTVVGKTYGL. Ser312, Ser335, and Ser338 each carry phosphoserine. A disordered region spans residues 326 to 350; it reads AEEELEEIASENSDSIYSSTPEVKA. Positions 337 to 350 are enriched in polar residues; sequence NSDSIYSSTPEVKA. A Phosphotyrosine modification is found at Tyr342.

This sequence belongs to the WD repeat STRAP family. As to quaternary structure, part of the core SMN complex that contains SMN1, GEMIN2/SIP1, DDX20/GEMIN3, GEMIN4, GEMIN5, GEMIN6, GEMIN7, GEMIN8 and STRAP/UNRIP. Part of the SMN-Sm complex that contains SMN1, GEMIN2/SIP1, DDX20/GEMIN3, GEMIN4, GEMIN5, GEMIN6, GEMIN7, GEMIN8, STRAP/UNRIP and the Sm proteins SNRPB, SNRPD1, SNRPD2, SNRPD3, SNRPE, SNRPF and SNRPG. Interacts directly with GEMIN6 and GEMIN7. Associates with the SMN complex in the cytoplasm but not in the nucleus. Also interacts with CSDE1/UNR and MAWBP. Interacts with PDPK1. Interacts with TRIM48.

The protein resides in the cytoplasm. Its subcellular location is the nucleus. Functionally, the SMN complex catalyzes the assembly of small nuclear ribonucleoproteins (snRNPs), the building blocks of the spliceosome, and thereby plays an important role in the splicing of cellular pre-mRNAs. Most spliceosomal snRNPs contain a common set of Sm proteins SNRPB, SNRPD1, SNRPD2, SNRPD3, SNRPE, SNRPF and SNRPG that assemble in a heptameric protein ring on the Sm site of the small nuclear RNA to form the core snRNP (Sm core). In the cytosol, the Sm proteins SNRPD1, SNRPD2, SNRPE, SNRPF and SNRPG are trapped in an inactive 6S pICln-Sm complex by the chaperone CLNS1A that controls the assembly of the core snRNP. To assemble core snRNPs, the SMN complex accepts the trapped 5Sm proteins from CLNS1A forming an intermediate. Binding of snRNA inside 5Sm triggers eviction of the SMN complex, thereby allowing binding of SNRPD3 and SNRPB to complete assembly of the core snRNP. STRAP plays a role in the cellular distribution of the SMN complex. Negatively regulates TGF-beta signaling but positively regulates the PDPK1 kinase activity by enhancing its autophosphorylation and by significantly reducing the association of PDPK1 with 14-3-3 protein. This is Serine-threonine kinase receptor-associated protein (Strap) from Rattus norvegicus (Rat).